Consider the following 860-residue polypeptide: Spindle and centriole-associated protein 1 (860 aa).

Disordered regions lie at residues 127–150, 172–201, 230–250, and 294–332; these read RKRT…GINQ, DDAG…HSNR, ATQS…AEDQ, and PLLA…TGSS. Composition is skewed to polar residues over residues 139 to 150, 190 to 200, and 230 to 245; these read PDSSQSHTGINQ, ELPNSLSQHSN, and ATQS…SSEL. At threonine 236 the chain carries Phosphothreonine. The residue at position 240 (serine 240) is a Phosphoserine. The span at 317-329 shows a compositional bias: low complexity; sequence SSSTASADRPSST. Residues 383–439 are a coiled coil; sequence RYLKESEIQLRKEVETRQQLEQMLGDHRELIDALTAEILSLREENSTMQARLQQYMV. Residues 623 to 645 are disordered; sequence PAFVSLSQPPCSSLPSTQQPRNP. The segment covering 627–642 has biased composition (low complexity); the sequence is SLSQPPCSSLPSTQQP. Phosphoserine is present on serine 648. Residues 693–718 are disordered; that stretch reads ITSSGGEQGDGLREPRKQGSASEVST. The stretch at 729-757 forms a coiled coil; sequence SSMEERIAELNRQSMEARSKLLQLIEQQK. Phosphoserine is present on residues serine 765, serine 766, serine 769, and serine 824. Residues 792 to 860 form a disordered region; that stretch reads GMEASESSKC…GWFALSAHIP (69 aa). The span at 804–824 shows a compositional bias: low complexity; it reads VSPVSGNSSRRSSGAISNSCS.

As to quaternary structure, interacts with CEP120.

Its subcellular location is the cytoplasm. It is found in the cytoskeleton. The protein localises to the microtubule organizing center. The protein resides in the centrosome. It localises to the centriole. Its subcellular location is the spindle. Functionally, regulator required for centriole duplication, for proper bipolar spindle formation and chromosome congression in mitosis. The chain is Spindle and centriole-associated protein 1 (Spice1) from Mus musculus (Mouse).